A 392-amino-acid chain; its full sequence is Alkaline phosphatase L (392 aa).

Residues 1–23 (MYKRSLIAASLSVAALVSAQAMA) form the signal peptide.

It belongs to the PstS family. Homodimer.

It is found in the secreted. Its subcellular location is the periplasm. The catalysed reaction is a phosphate monoester + H2O = an alcohol + phosphate. Functionally, has both a phosphomonoesterase and phosphodiesterase activity. The chain is Alkaline phosphatase L from Pseudomonas aeruginosa (strain UCBPP-PA14).